The following is a 92-amino-acid chain: MGRSLKKGPFVDGHLMKKVEAQANDEKKKVIKTWSRRSTIFPSFIGYTIAVYDGRKHVPVYIQEDMVGHKLGEFAPTRTYKGHAADDKKTRR.

The protein belongs to the universal ribosomal protein uS19 family.

Protein S19 forms a complex with S13 that binds strongly to the 16S ribosomal RNA. This Streptococcus thermophilus (strain ATCC BAA-491 / LMD-9) protein is Small ribosomal subunit protein uS19.